The sequence spans 236 residues: uncharacterized protein (236 aa).

The interval 217–236 (GESPDNVVRGEGGFGSTGGH) is disordered. Residues 226–236 (GEGGFGSTGGH) show a composition bias toward gly residues.

This is an uncharacterized protein from Ostreid herpesvirus 1 (isolate France) (OsHV-1).